A 178-amino-acid chain; its full sequence is Ribosome maturation factor RimM (178 aa).

The PRC barrel domain occupies 100 to 173; it reads ADEYFIHQLY…QIVVRLLPGL (74 aa).

This sequence belongs to the RimM family. As to quaternary structure, binds ribosomal protein uS19.

It is found in the cytoplasm. In terms of biological role, an accessory protein needed during the final step in the assembly of 30S ribosomal subunit, possibly for assembly of the head region. Essential for efficient processing of 16S rRNA. May be needed both before and after RbfA during the maturation of 16S rRNA. It has affinity for free ribosomal 30S subunits but not for 70S ribosomes. The polypeptide is Ribosome maturation factor RimM (Roseiflexus castenholzii (strain DSM 13941 / HLO8)).